A 317-amino-acid chain; its full sequence is Beta-ketoacyl-[acyl-carrier-protein] synthase III (317 aa).

Catalysis depends on residues Cys112 and His244. Residues Gln245 to Arg249 are ACP-binding. Asn274 is an active-site residue.

It belongs to the thiolase-like superfamily. FabH family. In terms of assembly, homodimer.

Its subcellular location is the cytoplasm. The enzyme catalyses malonyl-[ACP] + acetyl-CoA + H(+) = 3-oxobutanoyl-[ACP] + CO2 + CoA. Its pathway is lipid metabolism; fatty acid biosynthesis. Its function is as follows. Catalyzes the condensation reaction of fatty acid synthesis by the addition to an acyl acceptor of two carbons from malonyl-ACP. Catalyzes the first condensation reaction which initiates fatty acid synthesis and may therefore play a role in governing the total rate of fatty acid production. Possesses both acetoacetyl-ACP synthase and acetyl transacylase activities. Its substrate specificity determines the biosynthesis of branched-chain and/or straight-chain of fatty acids. This chain is Beta-ketoacyl-[acyl-carrier-protein] synthase III, found in Enterobacter sp. (strain 638).